The primary structure comprises 462 residues: 2-amino-5-chloromuconic acid deaminase (462 aa).

Residues Lys79 and Ser156 each act as charge relay system in the active site. The active-site Acyl-ester intermediate is Ser180.

This sequence belongs to the amidase family.

It catalyses the reaction (2Z,4E)-2-aminomuconate + H2O = (3E)-2-oxohex-3-enedioate + NH4(+). Its pathway is xenobiotic degradation; nitrobenzene degradation. It functions in the pathway xenobiotic degradation; 4-chloronitrobenzene degradation. Its function is as follows. Involved in the biodegradation of nitroaromatic and chlorinated nitroaromatic compounds. Catalyzes the conversion of 2-amino-5-chloromuconic acid into 2-hydroxy-5-chloromuconic acid and ammonia. Also able to catalyze the transformation of 2-aminomuconic acid into 2-hydroxymuconic acid. This chain is 2-amino-5-chloromuconic acid deaminase, found in Comamonas testosteroni (Pseudomonas testosteroni).